Reading from the N-terminus, the 1117-residue chain is WD repeat and HMG-box DNA-binding protein 1 (1117 aa).

7 WD repeats span residues 11-50, 52-91, 93-131, 134-173, 184-223, 228-267, and 271-310; these read GHTE…DPKS, NVGE…GILT, FTTN…QQQT, GHDA…CAVS, VNAK…NPFD, SISQ…CMER, and EKGY…SGKV. 2 positions are modified to phosphoserine: Ser333 and Ser377. Residue Lys390 forms a Glycyl lysine isopeptide (Lys-Gly) (interchain with G-Cter in SUMO2) linkage. Lys664 bears the N6-acetyllysine mark. Positions 816-885 are disordered; the sequence is LAETQSEEEK…NLFQSANSSD (70 aa). Thr819 bears the Phosphothreonine mark. Phosphoserine is present on Ser821. A compositionally biased stretch (basic and acidic residues) spans 861-872; the sequence is DTVSEEKPESHN. Polar residues predominate over residues 873–885; it reads HGQNLFQSANSSD. Ser910 and Ser923 each carry phosphoserine. Residues 911–1005 form a disordered region; it reads SKEPAVSANS…AVCLQNSENQ (95 aa). Over residues 917 to 943 the composition is skewed to polar residues; it reads SANSTRSANILDSMNKSSRKSTSLNRM. Lys953 is subject to N6-acetyllysine. Polar residues predominate over residues 962–974; sequence KQASAASYFQKRT. The span at 975–987 shows a compositional bias: basic and acidic residues; sequence PQADKTEEVKENP. The segment covering 988–1004 has biased composition (polar residues); it reads KSSSSDAPAVCLQNSEN. Positions 1004 to 1073 form a DNA-binding region, HMG box; sequence NQRPKTGFQM…SDGAEAKKRK (70 aa). Ser1030 carries the post-translational modification Phosphoserine. A disordered region spans residues 1054-1074; sequence WTNKAKGETASDGAEAKKRKR. A Glycyl lysine isopeptide (Lys-Gly) (interchain with G-Cter in SUMO1); alternate cross-link involves residue Lys1116. A Glycyl lysine isopeptide (Lys-Gly) (interchain with G-Cter in SUMO2); alternate cross-link involves residue Lys1116.

Trimer. Interacts with the polymerase alpha catalytic subunit POLA1. Interacts with MCM10. Interacts with DNA2. Interacts with CDC45 and GINS2 subunit of GINS complex; these interactions associate WDHD1 with the CMG helicase complex.

It is found in the nucleus. The protein resides in the nucleoplasm. Functionally, core replisome component that acts as a replication initiation factor. Binds directly to the CMG complex and functions as a hub to recruit additional proteins to the replication fork. This is WD repeat and HMG-box DNA-binding protein 1 (Wdhd1) from Mus musculus (Mouse).